We begin with the raw amino-acid sequence, 98 residues long: Venom toxin OcyC11 (98 aa).

The first 20 residues, 1 to 20 (MKIACTLVLFVMLRCYVNAR), serve as a signal peptide directing secretion.

Contains 4 disulfide bonds. Expressed by the venom gland.

It localises to the secreted. The sequence is that of Venom toxin OcyC11 from Opisthacanthus cayaporum (South American scorpion).